A 399-amino-acid polypeptide reads, in one-letter code: tRNA-specific 2-thiouridylase MnmA (399 aa).

ATP is bound by residues alanine 18 to serine 25 and leucine 44. Cysteine 112 functions as the Nucleophile in the catalytic mechanism. The cysteines at positions 112 and 213 are disulfide-linked. Glycine 136 provides a ligand contact to ATP. The tract at residues arginine 163–glutamine 165 is interaction with tRNA. The active-site Cysteine persulfide intermediate is cysteine 213.

This sequence belongs to the MnmA/TRMU family.

The protein resides in the cytoplasm. It carries out the reaction S-sulfanyl-L-cysteinyl-[protein] + uridine(34) in tRNA + AH2 + ATP = 2-thiouridine(34) in tRNA + L-cysteinyl-[protein] + A + AMP + diphosphate + H(+). Its function is as follows. Catalyzes the 2-thiolation of uridine at the wobble position (U34) of tRNA, leading to the formation of s(2)U34. The sequence is that of tRNA-specific 2-thiouridylase MnmA from Rhizobium rhizogenes (strain K84 / ATCC BAA-868) (Agrobacterium radiobacter).